A 258-amino-acid chain; its full sequence is 14-3-3 protein 6 (258 aa).

The disordered stretch occupies residues Asp-238–Glu-258. Basic and acidic residues predominate over residues Asp-245–Glu-258.

The protein belongs to the 14-3-3 family. In terms of assembly, homodimer.

The protein is 14-3-3 protein 6 (TFT6) of Solanum lycopersicum (Tomato).